We begin with the raw amino-acid sequence, 259 residues long: Undecaprenyl-diphosphatase 4 (259 aa).

8 helical membrane passes run 1 to 21, 39 to 59, 71 to 91, 99 to 119, 133 to 153, 174 to 194, 208 to 228, and 239 to 259; these read MNWL…FLPI, AGLF…FIYY, FSKL…IGLL, ISKT…FLYM, ITYK…FPAI, AYFS…LQFV, SLIV…SWMI, and FAYY…TDVF.

The protein belongs to the UppP family.

Its subcellular location is the cell membrane. The enzyme catalyses di-trans,octa-cis-undecaprenyl diphosphate + H2O = di-trans,octa-cis-undecaprenyl phosphate + phosphate + H(+). Its function is as follows. Catalyzes the dephosphorylation of undecaprenyl diphosphate (UPP). Confers resistance to bacitracin. In Bacillus cereus (strain ZK / E33L), this protein is Undecaprenyl-diphosphatase 4.